Reading from the N-terminus, the 652-residue chain is Sodium-dependent phosphate transporter 1-A (652 aa).

Over 1 to 25 (MESTTLASLAAVSVLAAGAQTDMSD) the chain is Cytoplasmic. The helical transmembrane segment at 26-46 (VLWLLILGFVIAFILAFSVGA) threads the bilayer. The Extracellular segment spans residues 47–66 (NDVANSFGTAVGSGVVTLRQ). The helical transmembrane segment at 67 to 87 (ACILATIFETVGAMLLGAKVS) threads the bilayer. Over 88 to 104 (ETIRSGIIDVHMYNGSE) the chain is Cytoplasmic. The helical transmembrane segment at 105–125 (AVLMAGSISAMFGSAVWQLAA) threads the bilayer. Residues 126-162 (SFLKLPISGTHCIVGATIGFSMVARGHQGVKWLELLR) are Extracellular-facing. Residues 163–183 (IVASWFLSPLLSGIMSAVLFY) form a helical membrane-spanning segment. Residues 184-201 (FVRKFILNKDDPVPNGLR) are Cytoplasmic-facing. A helical transmembrane segment spans residues 202–222 (ALPVFYAVTMGINLFSIMFTG). Over 223–234 (APMLGFDRIPWW) the chain is Extracellular. A helical transmembrane segment spans residues 235 to 255 (GTLLISLGCAILTALVVWFIV). Residues 256-482 (CPRLKKKMQS…IDELEIDKPE (227 aa)) lie on the Cytoplasmic side of the membrane. Residues 278–308 (TQLVEKKPSSNGLMDHHPGPPRNYSPVPQTP) are disordered. The span at 281–295 (VEKKPSSNGLMDHHP) shows a compositional bias: basic and acidic residues. Over residues 297–308 (PPRNYSPVPQTP) the composition is skewed to pro residues. The chain crosses the membrane as a helical span at residues 483–503 (VSTLFQFLQILTACFGSFAHG). Residues 504–531 (GNDVSNAIGPLVALWLIYDSASVAPSAP) are Extracellular-facing. The chain crosses the membrane as a helical span at residues 532–552 (TPIWLLLYGGVGICTGLWIWG). The Cytoplasmic segment spans residues 553-571 (RRVIQTMGKDLTPITPSSG). Residues 572–592 (FSIELASAITVVVASNIGLPV) traverse the membrane as a helical segment. At 593–621 (STTHCKVGSVVSVGWLRSRKAVDWHLFRN) the chain is on the extracellular side. The chain crosses the membrane as a helical span at residues 622-642 (IFIAWFVTVPISGLISAAIMA). Topologically, residues 643-652 (LFYYVILPLT) are cytoplasmic.

It belongs to the inorganic phosphate transporter (PiT) (TC 2.A.20) family.

The protein resides in the membrane. Its function is as follows. Sodium-phosphate symporter which plays a fundamental housekeeping role in phosphate transport. This chain is Sodium-dependent phosphate transporter 1-A (slc20a1a), found in Danio rerio (Zebrafish).